Here is a 779-residue protein sequence, read N- to C-terminus: MFFAFLITYLLGGVTFLPFILFIYLLTRPTHKSEELRIIEPNNDCLTKLDKDIRIQGWIRVTTKFLQGKSGSVKVQEIPQDQLPKSSSDNAVTDRKTISPSGINNQYVIRNPKDVYYATVQAGKLHLFDPVKTSELLHVINLHEYLVVFYPGTVTENELFSNRNAIFLKYPAVSHKKESSTKSLLNKDLYVYGRTPSNKEDWNYALLSYSKISPAIKPLEAPIDFDYASVHHNLTALSSPDTDWLNAFIGRIFLGIHKTEGFKSLVVEKLTKKLSRIKTPGIMTDVKVIDVDVGEAIPTVNGLKFESLSNGGELIVSADIWYEGDCSFKAETTANIKFGSHFPSKTVPLALVIRLTHVSGKVRLLIKPPPSNRVWYAFYEKPRLHLIVEPMVARKQLTNNYLINFITQKLVELVHETIVMPNMNDLAFFIDNEAPIKGGLWDIELFRAPTIQKPAEKDAKAERKKSGLSSSTSEESLNRHISKRSSNSNDTAPSSHIIADKNLEPTSNIQLKKNPDGNLVETSELSDSDENSVLSNKSSTLSKKVVENTSPLKYTHSASKSFIGEVQDSLQALKTKAHKPRSIGGDSSQTTLSETTKKYGSVAKKSFFQGVSDAKSFVKKIKSTYIDDSSSNSPSDIESNYSADDNEISKSKAQNAIDFNVTNTHSPSRSISSEKSYKAAERGQQDKHNDVLVDLNPNVEAEKSNPHSNSQKTSKNDMSRNQRNKYAKEIMTGQPTLHPQGQLPIQNVEQRATHKPLPRPPVQVETREPVRPVPPIPKL.

Residues 1–2 (MF) lie on the Cytoplasmic side of the membrane. A helical; Signal-anchor for type II membrane protein transmembrane segment spans residues 3–23 (FAFLITYLLGGVTFLPFILFI). The Lumenal segment spans residues 24 to 779 (YLLTRPTHKS…VRPVPPIPKL (756 aa)). N-linked (GlcNAc...) asparagine glycosylation is present at asparagine 233. One can recognise an SMP-LTD domain in the interval 238-429 (SSPDTDWLNA…MPNMNDLAFF (192 aa)). A compositionally biased stretch (basic and acidic residues) spans 454–465 (PAEKDAKAERKK). Disordered stretches follow at residues 454 to 539 (PAEK…NKSS) and 573 to 592 (LKTK…QTTL). Position 473 is a phosphoserine (serine 473). Positions 484-494 (RSSNSNDTAPS) are enriched in polar residues. 2 N-linked (GlcNAc...) asparagine glycosylation sites follow: asparagine 489 and asparagine 536. Asparagine 640 and asparagine 660 each carry an N-linked (GlcNAc...) asparagine glycan. The tract at residues 654–779 (QNAIDFNVTN…VRPVPPIPKL (126 aa)) is disordered. A compositionally biased stretch (polar residues) spans 660–674 (NVTNTHSPSRSISSE). The span at 675–691 (KSYKAAERGQQDKHNDV) shows a compositional bias: basic and acidic residues. The span at 733–750 (GQPTLHPQGQLPIQNVEQ) shows a compositional bias: polar residues.

Its subcellular location is the endoplasmic reticulum membrane. It is found in the nucleus membrane. Functionally, during endoplasmic reticulum (ER) stress or when cellular ceramide levels increase, induces contacts between the ER and medial-Golgi complex to facilitate non-vesicular transport of ceramides from the ER to the Golgi complex where they are converted to complex sphingolipids, preventing toxic ceramide accumulation. This Schizosaccharomyces pombe (strain 972 / ATCC 24843) (Fission yeast) protein is Nucleus-vacuole junction protein 2 (nvj2).